A 324-amino-acid polypeptide reads, in one-letter code: tRNA U34 carboxymethyltransferase (324 aa).

Residues Lys-91, Trp-105, Lys-110, Gly-130, 152 to 154, 181 to 182, Met-196, Tyr-200, and Arg-315 contribute to the carboxy-S-adenosyl-L-methionine site; these read DPS and IE.

This sequence belongs to the class I-like SAM-binding methyltransferase superfamily. CmoB family. In terms of assembly, homotetramer.

It carries out the reaction carboxy-S-adenosyl-L-methionine + 5-hydroxyuridine(34) in tRNA = 5-carboxymethoxyuridine(34) in tRNA + S-adenosyl-L-homocysteine + H(+). Functionally, catalyzes carboxymethyl transfer from carboxy-S-adenosyl-L-methionine (Cx-SAM) to 5-hydroxyuridine (ho5U) to form 5-carboxymethoxyuridine (cmo5U) at position 34 in tRNAs. The chain is tRNA U34 carboxymethyltransferase from Aliivibrio fischeri (strain MJ11) (Vibrio fischeri).